A 152-amino-acid chain; its full sequence is Transcriptional regulator MraZ (152 aa).

SpoVT-AbrB domains follow at residues 5–52 and 81–124; these read ATLV…TLPE and ASEC…DETT.

Belongs to the MraZ family. As to quaternary structure, forms oligomers.

Its subcellular location is the cytoplasm. The protein resides in the nucleoid. Negatively regulates its own expression and that of the subsequent genes in the proximal part of the division and cell wall (dcw) gene cluster. Acts by binding directly to DNA. May also regulate the expression of genes outside the dcw cluster. This is Transcriptional regulator MraZ from Enterobacter sp. (strain 638).